A 40-amino-acid chain; its full sequence is Beta/delta-ctenitoxin-Pr1a (40 aa).

Cystine bridges form between Cys1-Cys15, Cys8-Cys21, Cys14-Cys31, and Cys23-Cys29.

It belongs to the neurotoxin 03 (Tx2) family. 05 subfamily. As to expression, expressed by the venom gland.

It is found in the secreted. Potent insecticidal toxin that binds to two distinct sites in insect sodium channels, with close affinity (Kd1=34.7 pM and Kd2=35.1 pM). Its association is rather fast (1.4 and 8.5 minutes, respectively for sites 1 and 2) and its dissociation is a slower process (5.4 and 32.8 minutes, respectively). On rat brain synaptosomes the toxin partially competes (~30%) with the beta-toxin CssIV, but does not compete with the alpha-toxin AaII, nor with the beta-toxin Ts VII. On cockroach nerve cord synaptosomes, the toxin does not compete with the anti-insect toxin LqqIT1, but it competes with the 'alpha-like' toxin BomIV (IC(50)=80 pM). In cockroach neurons, the toxin inhibits the inactivation of sodium channels and it shifts the sodium channel activation to hyperpolarizing potentials. Hence, it behaves like an 'alpha-like' toxin and binds preferentially to site 3 on the insect Nav channel, located on the domain IV. The toxin may also inhibit the N-methyl-D-aspartate (NMDA)-subtype of ionotropic glutamate receptor (GRIN). In vivo, the toxin causes excitatory effects on insects. In Phoneutria reidyi (Brazilian Amazonian armed spider), this protein is Beta/delta-ctenitoxin-Pr1a.